The sequence spans 488 residues: Multidrug resistance outer membrane protein MdtP (488 aa).

Residues 1–23 form the signal peptide; that stretch reads MINRQLSRLLLCSILGSTTLISG. Cysteine 24 is lipidated: N-palmitoyl cysteine. A lipid anchor (S-diacylglycerol cysteine) is attached at cysteine 24.

This sequence belongs to the outer membrane factor (OMF) (TC 1.B.17) family. Could be part of a tripartite efflux system composed of MdtN, MdtO and MdtP.

Its subcellular location is the cell outer membrane. Its function is as follows. Could be involved in resistance to puromycin, acriflavine and tetraphenylarsonium chloride. This is Multidrug resistance outer membrane protein MdtP (mdtP) from Shigella flexneri.